We begin with the raw amino-acid sequence, 597 residues long: MAAHLSYGRVNLNVLREAVRRELREFLDKCAGSKAIVWDEYLTGPFGLIAQYSLLKEHEVEKMFTLKGSRLPAADVKNIIFLVRPRLELMDMIAENVLSEDRRGPTRDFHILFVPRRSLLCEQRLKDLGVLGSFIYREEYSLDLIPFDGDLLSMESESAFKECYLEGDQTSLYHAAKGLMTLQALYGTIPQIFGKGECARQVANMMVRMKREFTGSQNSVFPVFDNLLLLDRNVDLLTPLASQLTYEGLIDEIYGIQNSYVKLPPEKFAPKKQGGGGGKDLPTEAKKLQLNSAEELYAEIRDKNFNAVGSVLSKKAKIISAAFEERHNAKTVGEIKQFVSQLPHMQAARGSLANHTSIAELIKDVTTSEDFFDKLTVEQEFMSGIDTDKVNNYIEDCIAQKHPLIKVLRLVCLQSMCNSGLKQKVLDYYKREILQTYGYEHILTLNNLEKAGLLKAQTGGRNNYPTIRKTLRLWMDDVNEQNPTDISYVYSGYAPLSVRLAQLLSRPGWRSIEEVLRILPGPHFEERQPLPTGVQKKRQPGENRVTLVFFLGGVTFAEIAALRFLSQLEDGGTEYVIATTKLINGSSWLEALMEKPF.

This sequence belongs to the STXBP/unc-18/SEC1 family. In terms of assembly, core component of at least two putative endosomal tethering complexes, the homotypic fusion and vacuole protein sorting (HOPS) complex and the class C core vacuole/endosome tethering (CORVET) complex. Their common core is composed of the class C Vps proteins VPS11, VPS16, VPS18 and VPS33A, which in HOPS further associates with VPS39 and VPS41 and in CORVET with VPS8 and TGFBRAP1. Interacts with RAB5C, UVRAG, STX17, MON1A and MON1B. Associates with adaptor protein complex 3 (AP-3) and clathrin. Interacts with PLEKHM1. Ubiquitous.

It localises to the cytoplasmic vesicle. The protein resides in the late endosome membrane. It is found in the lysosome membrane. The protein localises to the early endosome. Its subcellular location is the autophagosome. It localises to the clathrin-coated vesicle. In terms of biological role, plays a role in vesicle-mediated protein trafficking to lysosomal compartments including the endocytic membrane transport and autophagic pathways. Believed to act as a core component of the putative HOPS and CORVET endosomal tethering complexes which are proposed to be involved in the Rab5-to-Rab7 endosome conversion probably implicating MON1A/B, and via binding SNAREs and SNARE complexes to mediate tethering and docking events during SNARE-mediated membrane fusion. The HOPS complex is proposed to be recruited to Rab7 on the late endosomal membrane and to regulate late endocytic, phagocytic and autophagic traffic towards lysosomes. The CORVET complex is proposed to function as a Rab5 effector to mediate early endosome fusion probably in specific endosome subpopulations. Required for fusion of endosomes and autophagosomes with lysosomes; the function is dependent on its association with VPS16 but not VIPAS39. The function in autophagosome-lysosome fusion implicates STX17 but not UVRAG. The sequence is that of Vacuolar protein sorting-associated protein 33A (Vps33a) from Rattus norvegicus (Rat).